Here is a 23-residue protein sequence, read N- to C-terminus: ALWKDILKNAGKAALNEINQIVQ.

Position 23 is a glutamine amide (Gln-23).

In terms of tissue distribution, expressed by the skin glands.

Its subcellular location is the secreted. Antimicrobial peptide, active against the Gram-positive bacterium S.aureus, and the Gram-negative bacteria E.coli and P.aeruginosa. Has hemolytic activity (5% hemolysis at 128 ug/ml). The chain is Dermaseptin-4 from Phyllomedusa tarsius (Brownbelly leaf frog).